A 152-amino-acid chain; its full sequence is Transcriptional repressor NrdR (152 aa).

Residues 1-10 (MKCPSCQHNG) show a composition bias toward polar residues. A disordered region spans residues 1–21 (MKCPSCQHNGSRVLDSRPADE). A zinc finger spans residues 3-34 (CPSCQHNGSRVLDSRPADEGKSIRRRRECEAC). An ATP-cone domain is found at 49 to 139 (LIVVKKEGVR…VYRQFKDINV (91 aa)).

This sequence belongs to the NrdR family. It depends on Zn(2+) as a cofactor.

Its function is as follows. Negatively regulates transcription of bacterial ribonucleotide reductase nrd genes and operons by binding to NrdR-boxes. The protein is Transcriptional repressor NrdR of Bacillus velezensis (strain DSM 23117 / BGSC 10A6 / LMG 26770 / FZB42) (Bacillus amyloliquefaciens subsp. plantarum).